We begin with the raw amino-acid sequence, 421 residues long: 3-isopropylmalate dehydratase large subunit (421 aa).

[4Fe-4S] cluster is bound by residues Cys302, Cys362, and Cys365.

It belongs to the aconitase/IPM isomerase family. LeuC type 2 subfamily. In terms of assembly, heterodimer of LeuC and LeuD. [4Fe-4S] cluster serves as cofactor.

The enzyme catalyses (2R,3S)-3-isopropylmalate = (2S)-2-isopropylmalate. It functions in the pathway amino-acid biosynthesis; L-leucine biosynthesis; L-leucine from 3-methyl-2-oxobutanoate: step 2/4. Functionally, catalyzes the isomerization between 2-isopropylmalate and 3-isopropylmalate, via the formation of 2-isopropylmaleate. The sequence is that of 3-isopropylmalate dehydratase large subunit from Nitratiruptor sp. (strain SB155-2).